Here is a 92-residue protein sequence, read N- to C-terminus: Acylphosphatase (92 aa).

The Acylphosphatase-like domain maps to 5–92 (RVHIIVSGLV…TSCREFRILT (88 aa)). Catalysis depends on residues R20 and N38.

This sequence belongs to the acylphosphatase family.

It catalyses the reaction an acyl phosphate + H2O = a carboxylate + phosphate + H(+). This is Acylphosphatase (acyP) from Chlorobaculum tepidum (strain ATCC 49652 / DSM 12025 / NBRC 103806 / TLS) (Chlorobium tepidum).